Reading from the N-terminus, the 173-residue chain is Oleosin 18.5 kDa (173 aa).

Residues Met1–Lys45 form a polar region. The interval Ala46–Tyr117 is hydrophobic. A run of 3 helical transmembrane segments spans residues Gly54–Ala74, Pro76–Ile96, and Thr97–Tyr117. A disordered region spans residues Tyr151 to Thr173. Basic and acidic residues predominate over residues Gly158–Arg167.

It belongs to the oleosin family.

Its subcellular location is the lipid droplet. It is found in the membrane. Its function is as follows. May have a structural role to stabilize the lipid body during desiccation of the seed by preventing coalescence of the oil. Probably interacts with both lipid and phospholipid moieties of lipid bodies. May also provide recognition signals for specific lipase anchorage in lipolysis during seedling growth. This Arabidopsis thaliana (Mouse-ear cress) protein is Oleosin 18.5 kDa.